Here is a 259-residue protein sequence, read N- to C-terminus: Ribosomal RNA large subunit methyltransferase E (259 aa).

S-adenosyl-L-methionine is bound by residues Gly-49, Trp-51, Asp-69, Asp-88, and Asp-112. The active-site Proton acceptor is the Lys-152. One can recognise a TRAM domain in the interval 199–257; it reads PIAEGDEHTVEIVDTGDEGDGIARIEGYTLFVDDAAEGDTVDVTVTDLKPNYGFAERRD.

Belongs to the class I-like SAM-binding methyltransferase superfamily. RNA methyltransferase RlmE family.

The protein localises to the cytoplasm. It catalyses the reaction uridine(2552) in 23S rRNA + S-adenosyl-L-methionine = 2'-O-methyluridine(2552) in 23S rRNA + S-adenosyl-L-homocysteine + H(+). In terms of biological role, specifically methylates the uridine in position 2552 of 23S rRNA at the 2'-O position of the ribose in the fully assembled 50S ribosomal subunit. The protein is Ribosomal RNA large subunit methyltransferase E of Halobacterium salinarum (strain ATCC 29341 / DSM 671 / R1).